We begin with the raw amino-acid sequence, 108 residues long: Ig kappa chain V-V region HP 93G7 (108 aa).

The framework-1 stretch occupies residues 1–23 (DIQMTQTTSSLSASLGDRVTISC). A disulfide bridge links C23 with C88. The interval 24–34 (RASQDISNYLN) is complementarity-determining-1. Residues 35-49 (WYQQKPDGTVKLLIY) are framework-2. Positions 50–56 (YTSRLHS) are complementarity-determining-2. Positions 57–88 (GVPSRFSGSGSGTDYSLTISNLEQEDIATYFC) are framework-3. The tract at residues 89–97 (QQGNMLPRT) is complementarity-determining-3. The framework-4 stretch occupies residues 98 to 108 (FGGGTKLEIKR).

This is Ig kappa chain V-V region HP 93G7 from Mus musculus (Mouse).